A 176-amino-acid polypeptide reads, in one-letter code: Nucleoside triphosphate/diphosphate phosphatase (176 aa).

The Proton donor role is filled by Arg-23. Mg(2+)-binding residues include Asn-87, Asp-103, Asp-105, Asp-107, Asp-120, and Glu-123.

The protein belongs to the Ntdp family. It depends on Mg(2+) as a cofactor.

The enzyme catalyses a ribonucleoside 5'-triphosphate + H2O = a ribonucleoside 5'-diphosphate + phosphate + H(+). The catalysed reaction is a ribonucleoside 5'-diphosphate + H2O = a ribonucleoside 5'-phosphate + phosphate + H(+). Its function is as follows. Has nucleoside phosphatase activity towards nucleoside triphosphates and nucleoside diphosphates. This Bacillus mycoides (strain KBAB4) (Bacillus weihenstephanensis) protein is Nucleoside triphosphate/diphosphate phosphatase.